A 302-amino-acid chain; its full sequence is Acetylesterase (302 aa).

The signal sequence occupies residues 1–21 (MGRFLTTTALALLATGGAATA). 2 N-linked (GlcNAc...) asparagine glycosylation sites follow: N84 and N101.

The protein belongs to the carbohydrate esterase CE16 family.

The protein resides in the secreted. The catalysed reaction is an acetyl ester + H2O = an aliphatic alcohol + acetate + H(+). Acetyl esterase that acts as an exo-deacetylase. Liberates acetic acid from xylo-oligomers. In Thermothelomyces thermophilus (Myceliophthora thermophila), this protein is Acetylesterase.